Here is a 93-residue protein sequence, read N- to C-terminus: YcgL domain-containing protein KPN78578_22820 (93 aa).

Residues 1 to 85 enclose the YcgL domain; sequence MFCVIYRSTK…PSENLLKKHL (85 aa).

In Klebsiella pneumoniae subsp. pneumoniae (strain ATCC 700721 / MGH 78578), this protein is YcgL domain-containing protein KPN78578_22820.